A 151-amino-acid polypeptide reads, in one-letter code: Ribosome maturation factor RimP (151 aa).

It belongs to the RimP family.

Its subcellular location is the cytoplasm. Functionally, required for maturation of 30S ribosomal subunits. The protein is Ribosome maturation factor RimP of Caldicellulosiruptor bescii (strain ATCC BAA-1888 / DSM 6725 / KCTC 15123 / Z-1320) (Anaerocellum thermophilum).